A 481-amino-acid polypeptide reads, in one-letter code: MNEVSVIKEGWLHKRGEYIKTWRPRYFLLKSDGSFIGYKERPEAPDQTLPPLNNFSVAECQLMKTERPRPNTFVIRCLQWTTVIERTFHVDSPDEREEWMRAIQMVANSLKQRAPGEDPMDYKCGSPSDSSTTEEMEVAVSKARAKVTMNDFDYLKLLGKGTFGKVILVREKATGRYYAMKILRKEVIIAKDEVAHTVTESRVLQNTRHPFLTALKYAFQTHDRLCFVMEYANGGELFFHLSRERVFTEERARFYGAEIVSALEYLHSRDVVYRDIKLENLMLDKDGHIKITDFGLCKEGISDGATMKTFCGTPEYLAPEVLEDNDYGRAVDWWGLGVVMYEMMCGRLPFYNQDHERLFELILMEEIRFPRTLSPEAKSLLAGLLKKDPKQRLGGGPSDAKEVMEHRFFLSINWQDVVQKKLLPPFKPQVTSEVDTRYFDDEFTAQSITITPPDRYDSLGLLELDQRTHFPQFSYSASIRE.

Position 1 is an N-acetylmethionine (Met-1). The PH domain occupies 5–108 (SVIKEGWLHK…WMRAIQMVAN (104 aa)). Ser-34 is modified (phosphoserine). A disulfide bridge connects residues Cys-60 and Cys-77. Ser-126 is modified (phosphoserine). O-linked (GlcNAc) serine glycans are attached at residues Ser-128 and Ser-131. In terms of domain architecture, Protein kinase spans 152–409 (FDYLKLLGKG…AKEVMEHRFF (258 aa)). ATP is bound by residues 158–166 (LGKGTFGKV) and Lys-181. Asp-275 acts as the Proton acceptor in catalysis. Positions 280 and 293 each coordinate Mn(2+). A disulfide bridge links Cys-297 with Cys-311. Thr-306 carries an O-linked (GlcNAc) threonine glycan. Thr-309 is modified (phosphothreonine; by PDPK1). The O-linked (GlcNAc) threonine glycan is linked to Thr-313. The AGC-kinase C-terminal domain occupies 410–481 (LSINWQDVVQ…QFSYSASIRE (72 aa)). A Phosphoserine modification is found at Ser-447. Thr-451 bears the Phosphothreonine mark. A phosphoserine mark is found at Ser-474 and Ser-478. O-linked (GlcNAc) serine; alternate glycosylation is present at Ser-474.

This sequence belongs to the protein kinase superfamily. AGC Ser/Thr protein kinase family. RAC subfamily. Interacts with BTBD10. Interacts with KCTD20. Interacts (via PH domain) with MTCP1, TCL1A and TCL1B; this interaction may facilitate AKT2 oligomerization and phosphorylation, hence increasing kinase activity. Interacts with PHB2; this interaction may be important for myogenic differentiation. Interacts (when phosphorylated) with CLIP3/ClipR-59; this interaction promotes AKT2 recruitment to the plasma membrane. Interacts with WDFY2/ProF (via WD repeats 1-3). Post-translationally, phosphorylation on Thr-309 and Ser-474 is required for full activity. Phosphorylation of the activation loop at Thr-309 by PDPK1/PDK1 is a prerequisite for full activation. Phosphorylated and activated by PDPK1/PDK1 in the presence of phosphatidylinositol 3,4,5-trisphosphate. Phosphorylation by mTORC2 in response to growth factors plays a key role in AKT1 activation: mTORC2 phosphorylates different sites depending on the context, such as Ser-474 or Ser-478, thereby facilitating subsequent phosphorylation of the activation loop by PDPK1/PDK1. In terms of processing, ubiquitinated; undergoes both 'Lys-48'- and 'Lys-63'-linked polyubiquitination. TRAF6 catalyzes 'Lys-63'-linked AKT2 ubiquitination; this modification may be important for AKT2 recruitment to the plasma membrane and for AKT2 activating phosphorylation. When phosphorylated, undergoes 'Lys-48'-polyubiquitination catalyzed by TTC3 in the nucleus, leading to its degradation by the proteasome. O-GlcNAcylation at Thr-306 and Thr-313 inhibits activating phosphorylation at Thr-309 via the disruption of the interaction between AKT and PDPK1/PDK1. As to expression, widely expressed. Expressed in myoblasts.

The protein resides in the cytoplasm. It is found in the nucleus. The protein localises to the cell membrane. Its subcellular location is the early endosome. It catalyses the reaction L-seryl-[protein] + ATP = O-phospho-L-seryl-[protein] + ADP + H(+). The catalysed reaction is L-threonyl-[protein] + ATP = O-phospho-L-threonyl-[protein] + ADP + H(+). Phosphorylation at Thr-309 (in the kinase domain) and Ser-474 (in the C-terminal regulatory region) is required for full activation. In adipocytes and hepatocytes, the activation is induced by insulin. Aminofurazans, such as 4-[2-(4-amino-2,5-dihydro-1,2,5-oxadiazol-3-yl)-6-{[(1S)-3-amino-1-phenylpropyl]oxy}-1-ethyl-1H-imidazo[4,5-c]pyridin-4-yl]-2-methylbut-3-yn-2-ol (compound 32), are potent AKT2 inhibitors. AKT2 phosphorylation of PKP1 is induced by insulin. Its function is as follows. Serine/threonine kinase closely related to AKT1 and AKT3. All 3 enzymes, AKT1, AKT2 and AKT3, are collectively known as AKT kinase. AKT regulates many processes including metabolism, proliferation, cell survival, growth and angiogenesis, through the phosphorylation of a range of downstream substrates. Over 100 substrates have been reported so far, although for most of them, the precise AKT kinase catalyzing the reaction was not specified. AKT regulates glucose uptake by mediating insulin-induced translocation of the SLC2A4/GLUT4 glucose transporter to the cell surface. Phosphorylation of PTPN1 at 'Ser-50' negatively modulates its phosphatase activity preventing dephosphorylation of the insulin receptor and the attenuation of insulin signaling. Phosphorylation of TBC1D4 triggers the binding of this effector to inhibitory 14-3-3 proteins, which is required for insulin-stimulated glucose transport. AKT also regulates the storage of glucose in the form of glycogen by phosphorylating GSK3A at 'Ser-21' and GSK3B at 'Ser-9', resulting in inhibition of its kinase activity. Phosphorylation of GSK3 isoforms by AKT is also thought to be one mechanism by which cell proliferation is driven. AKT also regulates cell survival via the phosphorylation of MAP3K5 (apoptosis signal-related kinase). Phosphorylation of 'Ser-83' decreases MAP3K5 kinase activity stimulated by oxidative stress and thereby prevents apoptosis. AKT mediates insulin-stimulated protein synthesis by phosphorylating TSC2 at 'Ser-939' and 'Thr-1462', thereby activating mTORC1 signaling and leading to both phosphorylation of 4E-BP1 and in activation of RPS6KB1. AKT is involved in the phosphorylation of members of the FOXO factors (Forkhead family of transcription factors), leading to binding of 14-3-3 proteins and cytoplasmic localization. In particular, FOXO1 is phosphorylated at 'Thr-24', 'Ser-256' and 'Ser-319'. FOXO3 and FOXO4 are phosphorylated on equivalent sites. AKT has an important role in the regulation of NF-kappa-B-dependent gene transcription and positively regulates the activity of CREB1 (cyclic AMP (cAMP)-response element binding protein). The phosphorylation of CREB1 induces the binding of accessory proteins that are necessary for the transcription of pro-survival genes such as BCL2 and MCL1. AKT phosphorylates 'Ser-454' on ATP citrate lyase (ACLY), thereby potentially regulating ACLY activity and fatty acid synthesis. Activates the 3B isoform of cyclic nucleotide phosphodiesterase (PDE3B) via phosphorylation of 'Ser-273', resulting in reduced cyclic AMP levels and inhibition of lipolysis. Phosphorylates PIKFYVE on 'Ser-318', which results in increased PI(3)P-5 activity. The Rho GTPase-activating protein DLC1 is another substrate and its phosphorylation is implicated in the regulation cell proliferation and cell growth. AKT plays a role as key modulator of the AKT-mTOR signaling pathway controlling the tempo of the process of newborn neurons integration during adult neurogenesis, including correct neuron positioning, dendritic development and synapse formation. Signals downstream of phosphatidylinositol 3-kinase (PI(3)K) to mediate the effects of various growth factors such as platelet-derived growth factor (PDGF), epidermal growth factor (EGF), insulin and insulin-like growth factor 1 (IGF1). AKT mediates the antiapoptotic effects of IGF1. Essential for the SPATA13-mediated regulation of cell migration and adhesion assembly and disassembly. May be involved in the regulation of the placental development. In response to lysophosphatidic acid stimulation, inhibits the ciliogenesis cascade. In this context, phosphorylates WDR44, hence stabilizing its interaction with Rab11 and preventing the formation of the ciliogenic Rab11-FIP3-RAB3IP complex. Also phosphorylates RAB3IP/Rabin8, thus may affect RAB3IP guanine nucleotide exchange factor (GEF) activity toward Rab8, which is important for cilia growth. Phosphorylates PKP1, facilitating its interaction with YWHAG and translocation to the nucleus, ultimately resulting in a reduction in keratinocyte intercellular adhesion. Phosphorylation of PKP1 increases PKP1 protein stability, translocation to the cytoplasm away from desmosome plaques and PKP1-driven cap-dependent translation. Several AKT2-specific substrates have been identified, including ANKRD2, C2CD5, CLK2 and PITX2. May play a role in myoblast differentiation. In this context, may act through PITX2 phosphorylation. Unphosphorylated PITX2 associates with an ELAVL1/HuR-containing complex, which stabilizes CCND1 cyclin mRNA, ensuring cell proliferation. Phosphorylation by AKT2 impairs this association, leading to CCND1 mRNA destabilization and progression towards differentiation. Also involved in the negative regulation of myogenesis in response to stress conditions. In this context, acts by phosphorylating ANKRD2. May also be a key regulator of glucose uptake. Regulates insulin-stimulated glucose transport by the increase of glucose transporter GLUT4 translocation from intracellular stores to the plasma membrane. In this context, acts by phosphorylating C2CD5/CDP138 on 'Ser-197' in insulin-stimulated adipocytes. Through the phosphorylation of CLK2 on 'Thr-343', involved in insulin-regulated suppression of hepatic gluconeogenesis. The polypeptide is RAC-beta serine/threonine-protein kinase (Homo sapiens (Human)).